A 338-amino-acid polypeptide reads, in one-letter code: 1-aminocyclopropane-1-carboxylate deaminase (338 aa).

K51 is subject to N6-(pyridoxal phosphate)lysine. Catalysis depends on S78, which acts as the Nucleophile.

Belongs to the ACC deaminase/D-cysteine desulfhydrase family. Homotrimer. The cofactor is pyridoxal 5'-phosphate.

The catalysed reaction is 1-aminocyclopropane-1-carboxylate + H2O = 2-oxobutanoate + NH4(+). Functionally, catalyzes a cyclopropane ring-opening reaction, the irreversible conversion of 1-aminocyclopropane-1-carboxylate (ACC) to ammonia and alpha-ketobutyrate. Allows growth on ACC as a nitrogen source. This Variovorax paradoxus protein is 1-aminocyclopropane-1-carboxylate deaminase.